Reading from the N-terminus, the 542-residue chain is Chaperonin GroEL 3 (542 aa).

ATP is bound by residues 30-33 (TLGP), Lys-51, 87-91 (DGTTT), Gly-415, and Asp-496.

Belongs to the chaperonin (HSP60) family. As to quaternary structure, forms a cylinder of 14 subunits composed of two heptameric rings stacked back-to-back. Interacts with the co-chaperonin GroES.

It is found in the cytoplasm. It catalyses the reaction ATP + H2O + a folded polypeptide = ADP + phosphate + an unfolded polypeptide.. Functionally, together with its co-chaperonin GroES, plays an essential role in assisting protein folding. The GroEL-GroES system forms a nano-cage that allows encapsulation of the non-native substrate proteins and provides a physical environment optimized to promote and accelerate protein folding. The sequence is that of Chaperonin GroEL 3 from Rhizobium johnstonii (strain DSM 114642 / LMG 32736 / 3841) (Rhizobium leguminosarum bv. viciae).